A 186-amino-acid chain; its full sequence is ATP synthase subunit delta (186 aa).

It belongs to the ATPase delta chain family. F-type ATPases have 2 components, F(1) - the catalytic core - and F(0) - the membrane proton channel. F(1) has five subunits: alpha(3), beta(3), gamma(1), delta(1), epsilon(1). F(0) has three main subunits: a(1), b(2) and c(10-14). The alpha and beta chains form an alternating ring which encloses part of the gamma chain. F(1) is attached to F(0) by a central stalk formed by the gamma and epsilon chains, while a peripheral stalk is formed by the delta and b chains.

It is found in the cell inner membrane. In terms of biological role, f(1)F(0) ATP synthase produces ATP from ADP in the presence of a proton or sodium gradient. F-type ATPases consist of two structural domains, F(1) containing the extramembraneous catalytic core and F(0) containing the membrane proton channel, linked together by a central stalk and a peripheral stalk. During catalysis, ATP synthesis in the catalytic domain of F(1) is coupled via a rotary mechanism of the central stalk subunits to proton translocation. This protein is part of the stalk that links CF(0) to CF(1). It either transmits conformational changes from CF(0) to CF(1) or is implicated in proton conduction. In Brucella melitensis biotype 2 (strain ATCC 23457), this protein is ATP synthase subunit delta.